Consider the following 185-residue polypeptide: Ribosome-recycling factor (185 aa).

This sequence belongs to the RRF family.

The protein localises to the cytoplasm. Functionally, responsible for the release of ribosomes from messenger RNA at the termination of protein biosynthesis. May increase the efficiency of translation by recycling ribosomes from one round of translation to another. This is Ribosome-recycling factor from Xanthomonas oryzae pv. oryzae (strain MAFF 311018).